A 312-amino-acid polypeptide reads, in one-letter code: MTHSTPIRIATRKSPLALWQAYYVKDALQKAHPGLEVELVTMVTKGDVILDTPLAKVGGKGLFVKELEVAMLEGRADLAVHSMKDVPVDFPEGLGLVTICEREDPRDAFVSNTYHHVDELPQGAVVGTCSLRRQCQLKAYRPDLVIKELRGNVGTRLSKLDAGEYDAIILAAAGLKRLELEERIRSFIEPEQSLPAVGQGAVGIECRTNDERILKLLEPLNHADTADRVKCERAMNLTLEGGCQVPIGSYALLEGDEIWLRALVGEPDGSEIVRGEIRGPRAQAEQLGVQLANQLLDEGAREILTKLYQDHE.

At C243 the chain carries S-(dipyrrolylmethanemethyl)cysteine.

This sequence belongs to the HMBS family. Monomer. The cofactor is dipyrromethane.

The enzyme catalyses 4 porphobilinogen + H2O = hydroxymethylbilane + 4 NH4(+). The protein operates within porphyrin-containing compound metabolism; protoporphyrin-IX biosynthesis; coproporphyrinogen-III from 5-aminolevulinate: step 2/4. Its function is as follows. Tetrapolymerization of the monopyrrole PBG into the hydroxymethylbilane pre-uroporphyrinogen in several discrete steps. In Vibrio vulnificus (strain CMCP6), this protein is Porphobilinogen deaminase.